The following is a 270-amino-acid chain: tRNA 2-(methylsulfanyl)-N(6)-isopentenyladenosine(37) hydroxylase (270 aa).

Fe cation-binding residues include E59, E137, H140, E190, E219, and H222.

It belongs to the MiaE family. As to quaternary structure, monomer. Fe cation is required as a cofactor.

The catalysed reaction is 2-methylsulfanyl-N(6)-dimethylallyladenosine(37) in tRNA + AH2 + O2 = N(6)-[(2E)-4-hydroxy-3-methylbut-2-en-1-yl]-2-(methylsulfanyl)adenosine(37) in tRNA + A + H2O. The protein operates within tRNA modification; 2-methylthio-N-6-(cis-hydroxy)isopentenyl adenosine-tRNA biosynthesis. Functionally, involved in specific tRNA modification. Catalyzes the oxygen-dependent hydroxylation of 2-methylthio-N-6-isopentenyl adenosine (ms2i6A) to produce 2-methylthio-N-6-(cis-hydroxy)isopentenyl adenosine (ms2io6A) at position 37 in tRNAs. Can also use N6-(dimethylallyl)adenosine (i6A) as substrate, with lower efficiency. The presence of the hydroxyl group on the tRNA may regulate the ability of S.typhimurium to grow on the citric acid cycle (CAC) intermediates succinate, fumarate and malate. In Salmonella typhimurium (strain LT2 / SGSC1412 / ATCC 700720), this protein is tRNA 2-(methylsulfanyl)-N(6)-isopentenyladenosine(37) hydroxylase.